The sequence spans 481 residues: Beta-amyrin 28-monooxygenase (481 aa).

Residues 4-24 (FYVPLLSLFVLFISLSFHFLF) form a helical membrane-spanning segment. Cys-428 is a binding site for heme.

Belongs to the cytochrome P450 family. Requires heme as cofactor. As to expression, mostly expressed in roots, and, to a lower extent, in stems and leaves. Accumulates only in the rhizome of plants.

It is found in the membrane. It carries out the reaction beta-amyrin + 3 reduced [NADPH--hemoprotein reductase] + 3 O2 = oleanolate + 3 oxidized [NADPH--hemoprotein reductase] + 4 H2O + 4 H(+). It participates in secondary metabolite biosynthesis; terpenoid biosynthesis. Functionally, component of the oleanane-type triterpene saponins (e.g. ginsenosides or panaxosides) biosynthetic pathway. Catalyzes the carboxylation of beta-amyrin at the C-28 position to form oleanolic acid during ginsenoside biosynthesis, a class of tetracyclic triterpenoid saponins. The protein is Beta-amyrin 28-monooxygenase of Panax ginseng (Korean ginseng).